We begin with the raw amino-acid sequence, 388 residues long: Chorismate synthase (388 aa).

Positions 39 and 45 each coordinate NADP(+). The disordered stretch occupies residues 95–118 (EKNEKSRRVSRPRPGHADLVGGMK). FMN-binding positions include 130-132 (RSS), 251-252 (NA), Gly-296, 311-315 (KPIPT), and Arg-337.

This sequence belongs to the chorismate synthase family. As to quaternary structure, homotetramer. It depends on FMNH2 as a cofactor.

It catalyses the reaction 5-O-(1-carboxyvinyl)-3-phosphoshikimate = chorismate + phosphate. It functions in the pathway metabolic intermediate biosynthesis; chorismate biosynthesis; chorismate from D-erythrose 4-phosphate and phosphoenolpyruvate: step 7/7. Its function is as follows. Catalyzes the anti-1,4-elimination of the C-3 phosphate and the C-6 proR hydrogen from 5-enolpyruvylshikimate-3-phosphate (EPSP) to yield chorismate, which is the branch point compound that serves as the starting substrate for the three terminal pathways of aromatic amino acid biosynthesis. This reaction introduces a second double bond into the aromatic ring system. The chain is Chorismate synthase from Listeria monocytogenes serotype 4b (strain F2365).